A 437-amino-acid chain; its full sequence is Trigger factor (437 aa).

The 86-residue stretch at 164 to 249 (GDRVTIDFAG…LKSVEAPKLP (86 aa)) folds into the PPIase FKBP-type domain.

It belongs to the FKBP-type PPIase family. Tig subfamily.

It localises to the cytoplasm. It catalyses the reaction [protein]-peptidylproline (omega=180) = [protein]-peptidylproline (omega=0). Its function is as follows. Involved in protein export. Acts as a chaperone by maintaining the newly synthesized protein in an open conformation. Functions as a peptidyl-prolyl cis-trans isomerase. The sequence is that of Trigger factor from Azoarcus sp. (strain BH72).